A 341-amino-acid chain; its full sequence is HTH-type transcriptional repressor PurR (341 aa).

In terms of domain architecture, HTH lacI-type spans 2-56 (ATIKDVAKRANVSTTTVSHVINKTRFVAEETRNAVWAAIKELHYSPSAVARSLKV). The H-T-H motif DNA-binding region spans 4-23 (IKDVAKRANVSTTTVSHVIN). The DNA-binding element occupies 48 to 56 (SAVARSLKV). Hypoxanthine-binding residues include Y73, R190, T192, F221, and D275.

As to quaternary structure, homodimer.

It participates in purine metabolism; purine nucleotide biosynthesis [regulation]. Functionally, is the main repressor of the genes involved in the de novo synthesis of purine nucleotides, regulating purB, purC, purEK, purF, purHD, purL, purMN and guaBA expression. PurR is allosterically activated to bind its cognate DNA by binding the purine corepressors, hypoxanthine or guanine, thereby effecting transcription repression. The protein is HTH-type transcriptional repressor PurR of Salmonella typhimurium (strain LT2 / SGSC1412 / ATCC 700720).